The sequence spans 473 residues: BTB/POZ domain-containing protein KCTD8 (473 aa).

The tract at residues 1–36 is disordered; the sequence is MALKDTGSGGSTILPISEMVSSSSSPGASAAAAPGP. The span at 21–35 shows a compositional bias: low complexity; the sequence is SSSSSPGASAAAAPG. The BTB domain maps to 44–122; the sequence is EVVELNVGGQ…LRDKQLALPE (79 aa). Phosphoserine is present on serine 78. At arginine 80 the chain carries Omega-N-methylarginine. The interval 326–409 is disordered; it reads IVSPKQEHED…WIPPPDKRRN (84 aa). The span at 330-346 shows a compositional bias: basic and acidic residues; the sequence is KQEHEDRKHDKVTDKGS. Residues 347 to 388 show a composition bias toward polar residues; that stretch reads ESGTSCNELSTSSCDSHSEASTPQDNPSSAQQATAHQPNTLT. Serine 410 carries the post-translational modification Phosphoserine.

In terms of assembly, interacts as a tetramer with GABRB1 and GABRB2.

It localises to the presynaptic cell membrane. Its subcellular location is the postsynaptic cell membrane. Auxiliary subunit of GABA-B receptors that determine the pharmacology and kinetics of the receptor response. Increases agonist potency and markedly alter the G-protein signaling of the receptors by accelerating onset and promoting desensitization. This is BTB/POZ domain-containing protein KCTD8 (KCTD8) from Homo sapiens (Human).